Here is a 481-residue protein sequence, read N- to C-terminus: Endonuclease Bax1 (481 aa).

Positions 1 to 136 (MLPWELARFS…EKKIIKAPTI (136 aa)) are N-terminal domain (NTD). Positions 158–250 (YKLTVYVSSN…LKLANFKELK (93 aa)) are central domain (CRD). The segment at 260–364 (DSSVEEKFYK…YKRKIDISLV (105 aa)) is nuclease domain (NUS). Residues E265, D297, and E310 each contribute to the a divalent metal cation site. The segment at 414 to 481 (PGYIFLKNYY…AIVIKDKKVN (68 aa)) is C-terminal domain (CTD).

The protein belongs to the Bax1 family. In terms of assembly, homodimer in solution, forms a heterodimer with XPB2. Requires a divalent metal cation as cofactor.

In terms of biological role, a dual DNA endonuclease probably involved in nucleotide excision repair (NER). The N-terminal nuclease domain (NTD) of the XPB2-Bax1 complex cleaves on one side of a DNA bubble (which presumably mimics DNA damage), while the NUS nuclease domain cleaves the other side, respectively called 5' and 3' nuclease activities. Interaction with XPB blocks the NTD nuclease activity. Binds to and stimulates the ATPase activity (and probably also helicase activity) of XPB2. Increases affinity of XPB2 for forked DNA. Does not stimulate the DNA-dependent activity of XPB1. In an XPB2-Bax1-bubble DNA crystal (12 bp of dsDNA, a 6 base bubble and 6 bp of dsDNA) the short 6 bp arm is unwound. The 2 helicase and the ThM domains of XPB2 with the NTD and CRD domains of Bax1 encircle the DNA, forming a tunnel where the 12 bp dsDNA and the ds-ssDNA junction are located. The ThM domain is wedged between the ssDNA tails, with the 5' ssDNA contacting Bax1 and the 3' ssDNA in a channel in XPB2. The nuclease domain (NUS) of Bax1 does not contact DNA in the bubble DNA complex. The polypeptide is Endonuclease Bax1 (Sulfurisphaera tokodaii (strain DSM 16993 / JCM 10545 / NBRC 100140 / 7) (Sulfolobus tokodaii)).